Here is a 1203-residue protein sequence, read N- to C-terminus: Rho GTPase-activating protein gacGG (1203 aa).

RCC1 repeat units follow at residues 52–104 (TGEL…AIME), 106–148 (GLLY…VVAD), 155–204 (KRSV…AIVE), 206–255 (NEVF…ARSG), 257–298 (GNVC…VLSE), 299–359 (KGEI…EGRN), and 361–410 (LSVY…YLRG). Positions 316 to 343 (KLDVNSSPNINSSSGTTTPTTNTTTTTK) are disordered. Residues 320–343 (NSSPNINSSSGTTTPTTNTTTTTK) show a composition bias toward low complexity. The 214-residue stretch at 381-594 (VDIAESMRRK…TIMKQYPLME (214 aa)) folds into the Rho-GAP domain. Residues 649-679 (TLEIKNNQNNQNNQKENNNNNNNINNSNNNN) adopt a coiled-coil conformation. Disordered regions lie at residues 657-725 (NNQN…TGNI), 746-789 (KDGN…NLSP), and 831-852 (FANS…LIGS). Low complexity-rich tracts occupy residues 746–788 (KDGN…PNLS) and 833–852 (NSGS…LIGS). A coiled-coil region spans residues 995–1078 (FDLLEKSMTE…ISNQNLSRVN (84 aa)).

The protein localises to the cytoplasm. Its function is as follows. Rho GTPase-activating protein involved in the signal transduction pathway. This Dictyostelium discoideum (Social amoeba) protein is Rho GTPase-activating protein gacGG (gacGG).